Reading from the N-terminus, the 130-residue chain is Small ribosomal subunit protein uS11 (130 aa).

It belongs to the universal ribosomal protein uS11 family. As to quaternary structure, part of the 30S ribosomal subunit. Interacts with proteins S7 and S18. Binds to IF-3.

Its function is as follows. Located on the platform of the 30S subunit, it bridges several disparate RNA helices of the 16S rRNA. Forms part of the Shine-Dalgarno cleft in the 70S ribosome. This is Small ribosomal subunit protein uS11 from Aliarcobacter butzleri (strain RM4018) (Arcobacter butzleri).